We begin with the raw amino-acid sequence, 226 residues long: PKHD-type hydroxylase Sde_2812 (226 aa).

Residues 78–178 (KIFPPLFNCY…RLASFFWLQS (101 aa)) form the Fe2OG dioxygenase domain. Residues histidine 96, aspartate 98, and histidine 159 each coordinate Fe cation. Residue arginine 169 participates in 2-oxoglutarate binding.

Fe(2+) serves as cofactor. It depends on L-ascorbate as a cofactor.

The polypeptide is PKHD-type hydroxylase Sde_2812 (Saccharophagus degradans (strain 2-40 / ATCC 43961 / DSM 17024)).